Reading from the N-terminus, the 31-residue chain is GVPCAESCVWIPCTVTALLGCSCKDKVCYLD.

The cyclopeptide (Gly-Asp) cross-link spans 1–31 (GVPCAESCVWIPCTVTALLGCSCKDKVCYLD). 3 disulfides stabilise this stretch: C4-C21, C8-C23, and C13-C28.

In terms of processing, contains 3 disulfide bonds. This is a cyclic peptide.

In terms of biological role, probably participates in a plant defense mechanism. This Clitoria ternatea (Butterfly pea) protein is Cyclotide cter-C.